The sequence spans 571 residues: Serine/threonine-protein kinase Nek7 (571 aa).

The 259-residue stretch at 19–277 (YHVVEQVRRG…LRNPSLQPYL (259 aa)) folds into the Protein kinase domain. Residues 25 to 33 (VRRGKSSSD) and K48 contribute to the ATP site. The Proton acceptor role is filled by D144. Disordered regions lie at residues 298–321 (SPKD…SREK) and 338–363 (TETG…ETKR). Over residues 312–321 (FGKERVSREK) the composition is skewed to basic and acidic residues. Residues 342–351 (SSSSSQPASS) are compositionally biased toward low complexity.

The protein belongs to the protein kinase superfamily. NEK Ser/Thr protein kinase family. NIMA subfamily.

It catalyses the reaction L-seryl-[protein] + ATP = O-phospho-L-seryl-[protein] + ADP + H(+). The catalysed reaction is L-threonyl-[protein] + ATP = O-phospho-L-threonyl-[protein] + ADP + H(+). May be involved in plant development processes. The polypeptide is Serine/threonine-protein kinase Nek7 (NEK7) (Arabidopsis thaliana (Mouse-ear cress)).